Here is a 474-residue protein sequence, read N- to C-terminus: Aspartyl/glutamyl-tRNA(Asn/Gln) amidotransferase subunit B (474 aa).

It belongs to the GatB/GatE family. GatB subfamily. As to quaternary structure, heterotrimer of A, B and C subunits.

The catalysed reaction is L-glutamyl-tRNA(Gln) + L-glutamine + ATP + H2O = L-glutaminyl-tRNA(Gln) + L-glutamate + ADP + phosphate + H(+). It catalyses the reaction L-aspartyl-tRNA(Asn) + L-glutamine + ATP + H2O = L-asparaginyl-tRNA(Asn) + L-glutamate + ADP + phosphate + 2 H(+). Allows the formation of correctly charged Asn-tRNA(Asn) or Gln-tRNA(Gln) through the transamidation of misacylated Asp-tRNA(Asn) or Glu-tRNA(Gln) in organisms which lack either or both of asparaginyl-tRNA or glutaminyl-tRNA synthetases. The reaction takes place in the presence of glutamine and ATP through an activated phospho-Asp-tRNA(Asn) or phospho-Glu-tRNA(Gln). The protein is Aspartyl/glutamyl-tRNA(Asn/Gln) amidotransferase subunit B of Wolbachia pipientis wMel.